The following is a 166-amino-acid chain: Glutamyl-tRNA(Gln) amidotransferase subunit C-2, mitochondrial (166 aa).

The protein belongs to the GatC family. In terms of assembly, subunit of the heterotrimeric GatCAB amidotransferase (AdT) complex, composed of A, B and C subunits.

It localises to the mitochondrion. The catalysed reaction is L-glutamyl-tRNA(Gln) + L-glutamine + ATP + H2O = L-glutaminyl-tRNA(Gln) + L-glutamate + ADP + phosphate + H(+). Its function is as follows. Allows the formation of correctly charged Gln-tRNA(Gln) through the transamidation of misacylated Glu-tRNA(Gln) in the mitochondria. The reaction takes place in the presence of glutamine and ATP through an activated gamma-phospho-Glu-tRNA(Gln). This is Glutamyl-tRNA(Gln) amidotransferase subunit C-2, mitochondrial from Culex quinquefasciatus (Southern house mosquito).